We begin with the raw amino-acid sequence, 323 residues long: Melanocortin receptor 3 (323 aa).

Over 1 to 37 (MNSSCCLSSVSPMLPNLSEHPAAPPASNRSGSGFCEQ) the chain is Extracellular. N-linked (GlcNAc...) asparagine glycans are attached at residues Asn-2, Asn-16, and Asn-28. Residues 38–63 (VFIKPEVFLALGIVSLMENILVILAV) traverse the membrane as a helical segment. Over 64–75 (VRNGNLHSPMYF) the chain is Cytoplasmic. The chain crosses the membrane as a helical span at residues 76-100 (FLCSLAAADMLVSLSNSLETIMIAV). Over 101–118 (INSDSLTLEDQFIQHMDN) the chain is Extracellular. A helical membrane pass occupies residues 119–140 (IFDSMICISLVASICNLLAIAI). At 141–160 (DRYVTIFYALRYHSIMTVRK) the chain is on the cytoplasmic side. Residues 161 to 181 (ALTLIGVIWVCCGICGVMFII) form a helical membrane-spanning segment. Residues 182–186 (YSESK) lie on the Extracellular side of the membrane. The chain crosses the membrane as a helical span at residues 187-210 (MVIVCLITMFFAMVLLMGTLYIHM). At 211-245 (FLFARLHVQRIAVLPPAGVVAPQQHSCMKGAVTIT) the chain is on the cytoplasmic side. Residues 246–268 (ILLGVFIFCWAPFFLHLVLIITC) form a helical membrane-spanning segment. Topologically, residues 269-277 (PTNPYCICY) are extracellular. The chain crosses the membrane as a helical span at residues 278–301 (TAHFNTYLVLIMCNSVIDPLIYAF). The Cytoplasmic portion of the chain corresponds to 302-323 (RSLELRNTFKEILCGCNSMNLG). Cys-315 carries the S-palmitoyl cysteine lipid modification.

This sequence belongs to the G-protein coupled receptor 1 family. In terms of tissue distribution, brain.

The protein resides in the cell membrane. In terms of biological role, receptor for MSH (alpha, beta and gamma) and ACTH. This receptor is mediated by G proteins which activate adenylate cyclase. Required for expression of anticipatory patterns of activity and wakefulness during periods of limited nutrient availability and for the normal regulation of circadian clock activity in the brain. This chain is Melanocortin receptor 3 (Mc3r), found in Mus musculus (Mouse).